The sequence spans 261 residues: Imidazole glycerol phosphate synthase subunit HisF (261 aa).

Residues D12 and D131 contribute to the active site.

Belongs to the HisA/HisF family. In terms of assembly, heterodimer of HisH and HisF.

It is found in the cytoplasm. The catalysed reaction is 5-[(5-phospho-1-deoxy-D-ribulos-1-ylimino)methylamino]-1-(5-phospho-beta-D-ribosyl)imidazole-4-carboxamide + L-glutamine = D-erythro-1-(imidazol-4-yl)glycerol 3-phosphate + 5-amino-1-(5-phospho-beta-D-ribosyl)imidazole-4-carboxamide + L-glutamate + H(+). The protein operates within amino-acid biosynthesis; L-histidine biosynthesis; L-histidine from 5-phospho-alpha-D-ribose 1-diphosphate: step 5/9. Its function is as follows. IGPS catalyzes the conversion of PRFAR and glutamine to IGP, AICAR and glutamate. The HisF subunit catalyzes the cyclization activity that produces IGP and AICAR from PRFAR using the ammonia provided by the HisH subunit. The chain is Imidazole glycerol phosphate synthase subunit HisF from Brucella melitensis biotype 2 (strain ATCC 23457).